Reading from the N-terminus, the 974-residue chain is Probable proton ATPase 1B (974 aa).

Positions 1–23 (MSSKKYELDAAAFEDKPESHSDA) are enriched in basic and acidic residues. The disordered stretch occupies residues 1-61 (MSSKKYELDA…ATDLLPPSKG (61 aa)). Helical transmembrane passes span 93–112 (GLWG…EFAL), 118–137 (GAIL…YETI), 265–286 (VMLA…YLLA), and 295–321 (ALQF…TLAV). Catalysis depends on D351, which acts as the 4-aspartylphosphate intermediate. The next 6 membrane-spanning stretches (helical) occupy residues 631–651 (AAAD…AMLV), 662–684 (FLTY…CFSL), 698–712 (FFHL…ITLL), 738–761 (VVFV…LWIG), 813–840 (FFFY…AASF), and 869–887 (VWIY…KVLA). Positions 952 to 974 (REDTHVLNESTSPVNAFSPKVKK) are disordered.

It belongs to the cation transport ATPase (P-type) (TC 3.A.3) family. Type IIIA subfamily.

It is found in the membrane. The catalysed reaction is ATP + H2O + H(+)(in) = ADP + phosphate + 2 H(+)(out). The chain is Probable proton ATPase 1B (H1B) from Leishmania donovani.